The sequence spans 200 residues: Cleavage and polyadenylation specificity factor subunit 5 (200 aa).

A Nudix hydrolase domain is found at 45–170; it reads LRKAVEGIII…LSLIAVSLYE (126 aa). Residues 70 to 72 form an interaction with RNA region; it reads NYF. The Nudix box motif lies at 77 to 98; the sequence is GKLKPGENEIDGLIRKLTKKLS.

This sequence belongs to the Nudix hydrolase family. CPSF5 subfamily. Homodimer (via N- and C-terminus); binds RNA as homodimer. Component of the cleavage factor Im (CFIm) complex.

It is found in the nucleus. Its subcellular location is the cytoplasm. In terms of biological role, component of the cleavage factor Im (CFIm) complex that functions as an activator of the pre-mRNA 3'-end cleavage and polyadenylation processing required for the maturation of pre-mRNA into functional mRNAs. CFIm contributes to the recruitment of multiprotein complexes on specific sequences on the pre-mRNA 3'-end, so called cleavage and polyadenylation signals (pA signals). Most pre-mRNAs contain multiple pA signals, resulting in alternative cleavage and polyadenylation (APA) producing mRNAs with variable 3'-end formation. The CFIm complex acts as a key regulator of cleavage and polyadenylation site choice during APA through its binding to 5'-UGUA-3' elements localized in the 3'-untranslated region (UTR) for a huge number of pre-mRNAs. Binds to 5'-UGUA-3' elements localized upstream of pA signals that act as enhancers of pre-mRNA 3'-end processing. The homodimer mediates simultaneous sequence-specific recognition of two 5'-UGUA-3' elements within the pre-mRNA. Plays a role in somatic cell fate transitions and pluripotency by regulating widespread changes in gene expression through an APA-dependent function. Binds to chromatin. The chain is Cleavage and polyadenylation specificity factor subunit 5 from Dictyostelium discoideum (Social amoeba).